The following is a 760-amino-acid chain: Probable ubiquitin carboxyl-terminal hydrolase creB (760 aa).

The interval methionine 1–valine 28 is disordered. Residues phenylalanine 8–serine 18 show a composition bias toward polar residues. The region spanning tyrosine 55–threonine 469 is the USP domain. Cysteine 64 functions as the Nucleophile in the catalytic mechanism. 2 disordered regions span residues alanine 114 to aspartate 146 and proline 242 to asparagine 270. The segment covering valine 258–asparagine 270 has biased composition (polar residues). The active-site Proton acceptor is the histidine 420. Residues glutamate 520–serine 760 are disordered. A coiled-coil region spans residues lysine 575 to lysine 635. 3 stretches are compositionally biased toward basic and acidic residues: residues valine 578–alanine 626, lysine 635–leucine 651, and aspartate 708–glycine 742. A compositionally biased stretch (basic residues) spans histidine 743–serine 760.

It belongs to the peptidase C19 family. In terms of assembly, interacts with creA, creC and qutD.

The catalysed reaction is Thiol-dependent hydrolysis of ester, thioester, amide, peptide and isopeptide bonds formed by the C-terminal Gly of ubiquitin (a 76-residue protein attached to proteins as an intracellular targeting signal).. Functionally, ubiquitin thioesterase component of the regulatory network controlling carbon source utilization through ubiquitination and deubiquitination involving creA, creB, creC, creD and acrB. Deubiquitinates the creA catabolic repressor and the quinate permease qutD. Also plays a role in response to carbon starvation and the control of extracellular proteases activity. The sequence is that of Probable ubiquitin carboxyl-terminal hydrolase creB (creB) from Aspergillus clavatus (strain ATCC 1007 / CBS 513.65 / DSM 816 / NCTC 3887 / NRRL 1 / QM 1276 / 107).